Consider the following 124-residue polypeptide: Histone H2A (124 aa).

A compositionally biased stretch (basic residues) spans 1–18 (MSGRGKGGKAKGKSKTRS). Residues 1–23 (MSGRGKGGKAKGKSKTRSSRAGL) form a disordered region. N-acetylserine is present on Ser-2. Ser-2 bears the Phosphoserine mark. Position 104 is an N5-methylglutamine (Gln-104).

Belongs to the histone H2A family. As to quaternary structure, the nucleosome is a histone octamer containing two molecules each of H2A, H2B, H3 and H4 assembled in one H3-H4 heterotetramer and two H2A-H2B heterodimers. The octamer wraps approximately 147 bp of DNA. Phosphorylation of Ser-2 directly represses transcription.

It localises to the nucleus. The protein localises to the chromosome. In terms of biological role, core component of nucleosome. Nucleosomes wrap and compact DNA into chromatin, limiting DNA accessibility to the cellular machineries which require DNA as a template. Histones thereby play a central role in transcription regulation, DNA repair, DNA replication and chromosomal stability. DNA accessibility is regulated via a complex set of post-translational modifications of histones, also called histone code, and nucleosome remodeling. In Platynereis dumerilii (Dumeril's clam worm), this protein is Histone H2A.